A 197-amino-acid polypeptide reads, in one-letter code: dCTP deaminase (197 aa).

DCTP-binding positions include 110–115 (RSSLAR), Asp-128, 136–138 (VLE), Tyr-171, and Gln-182. Glu-138 functions as the Proton donor/acceptor in the catalytic mechanism.

The protein belongs to the dCTP deaminase family. In terms of assembly, homotrimer.

It catalyses the reaction dCTP + H2O + H(+) = dUTP + NH4(+). Its pathway is pyrimidine metabolism; dUMP biosynthesis; dUMP from dCTP (dUTP route): step 1/2. Functionally, catalyzes the deamination of dCTP to dUTP. The protein is dCTP deaminase of Alteromonas mediterranea (strain DSM 17117 / CIP 110805 / LMG 28347 / Deep ecotype).